The chain runs to 259 residues: Type III pantothenate kinase (259 aa).

6 to 13 (DVGNTNCT) serves as a coordination point for ATP. A substrate-binding site is contributed by 107–110 (GSDR). Residue Asp-109 is the Proton acceptor of the active site. Residue Asp-129 coordinates K(+). Residue Thr-132 participates in ATP binding. Thr-184 lines the substrate pocket.

The protein belongs to the type III pantothenate kinase family. In terms of assembly, homodimer. NH4(+) is required as a cofactor. Requires K(+) as cofactor.

The protein localises to the cytoplasm. The catalysed reaction is (R)-pantothenate + ATP = (R)-4'-phosphopantothenate + ADP + H(+). It functions in the pathway cofactor biosynthesis; coenzyme A biosynthesis; CoA from (R)-pantothenate: step 1/5. In terms of biological role, catalyzes the phosphorylation of pantothenate (Pan), the first step in CoA biosynthesis. The sequence is that of Type III pantothenate kinase from Listeria innocua serovar 6a (strain ATCC BAA-680 / CLIP 11262).